The sequence spans 122 residues: Co-chaperonin GroES (122 aa).

Belongs to the GroES chaperonin family. Heptamer of 7 subunits arranged in a ring. Interacts with the chaperonin GroEL.

Its subcellular location is the cytoplasm. Its function is as follows. Together with the chaperonin GroEL, plays an essential role in assisting protein folding. The GroEL-GroES system forms a nano-cage that allows encapsulation of the non-native substrate proteins and provides a physical environment optimized to promote and accelerate protein folding. GroES binds to the apical surface of the GroEL ring, thereby capping the opening of the GroEL channel. The sequence is that of Co-chaperonin GroES from Aquifex aeolicus (strain VF5).